A 125-amino-acid chain; its full sequence is Large ribosomal subunit protein bL12 (125 aa).

This sequence belongs to the bacterial ribosomal protein bL12 family. Homodimer. Part of the ribosomal stalk of the 50S ribosomal subunit. Forms a multimeric L10(L12)X complex, where L10 forms an elongated spine to which 2 to 4 L12 dimers bind in a sequential fashion. Binds GTP-bound translation factors.

In terms of biological role, forms part of the ribosomal stalk which helps the ribosome interact with GTP-bound translation factors. Is thus essential for accurate translation. The chain is Large ribosomal subunit protein bL12 from Delftia acidovorans (strain DSM 14801 / SPH-1).